Reading from the N-terminus, the 285-residue chain is Probable methyltransferase ltbC (285 aa).

The segment at 1–22 (MASTGQTNNYKQGYSSQTVETQ) is disordered.

This sequence belongs to the class I-like SAM-binding methyltransferase superfamily. Monomer.

Its function is as follows. Probable methyltransferase; part of the gene cluster that mediates the biosynthesis of luteodienoside A, a glycosylated polyketide consisting of an unusual 1-O-beta-D-glucopyranosyl-myo-inositol (glucinol) ester of 3-hydroxy-2,2,4-trimethylocta-4,6-dienoic acid. The HR-PKS ltbA produces the trimethylated polyketide chain from acetyl-CoA, malonyl-CoA and S-adenosylmethionine (SAM), and the ltbA cAT domain then uses glucinol produced by the glycosyltransferase ltbB as an offloading substrate to release luteodienoside A. Since ltbA and ltbB are sufficient for the biosynthesis of luteodienoside A, the functions of the methyltransferase ltbC and the FAD-binding monooxygenase ltbD within the pathway remain obscur. The sequence is that of Probable methyltransferase ltbC from Aspergillus luteorubrus.